A 93-amino-acid polypeptide reads, in one-letter code: Small ribosomal subunit protein bS18 (93 aa).

Residues 1 to 11 (MAPSARNRKPG) are compositionally biased toward basic residues. The tract at residues 1–27 (MAPSARNRKPGARSMAKAAALRKPKKK) is disordered.

It belongs to the bacterial ribosomal protein bS18 family. In terms of assembly, part of the 30S ribosomal subunit. Forms a tight heterodimer with protein bS6.

Binds as a heterodimer with protein bS6 to the central domain of the 16S rRNA, where it helps stabilize the platform of the 30S subunit. This Salinispora tropica (strain ATCC BAA-916 / DSM 44818 / JCM 13857 / NBRC 105044 / CNB-440) protein is Small ribosomal subunit protein bS18.